The following is a 200-amino-acid chain: Endochitinase (200 aa).

The Proton donor role is filled by E58.

It belongs to the glycosyl hydrolase 19 family. Chitinase class I subfamily.

It carries out the reaction Random endo-hydrolysis of N-acetyl-beta-D-glucosaminide (1-&gt;4)-beta-linkages in chitin and chitodextrins.. This protein functions as a defense against chitin-containing fungal pathogens. The sequence is that of Endochitinase from Avena sativa (Oat).